A 200-amino-acid polypeptide reads, in one-letter code: Phospholipase A2 inhibitor CNF (200 aa).

The first 19 residues, 1–19 (MKYLHTICLLFIFVARGNS), serve as a signal peptide directing secretion. Disulfide bonds link cysteine 22/cysteine 46, cysteine 25/cysteine 32, cysteine 39/cysteine 67, cysteine 73/cysteine 94, cysteine 95/cysteine 100, cysteine 118/cysteine 143, cysteine 136/cysteine 165, and cysteine 169/cysteine 191. N-linked (GlcNAc...) asparagine; partial glycosylation is present at asparagine 176.

As to quaternary structure, occurs as a mixture of oligomers. Tetrameric arrangement appears to be the predominant quaternary structure. Interacts with phospholipase A2 crotoxin basic subunit CBd; the interaction leads to dissociation of the CA-CB heterodimer and to inhibition of PLA2 activity of the CB subunit. Post-translationally, the carbohydrate moiety increases the inhibition capacity of CNF, but is not essential for activity and for oligomerization. Expressed by the liver.

It localises to the secreted. Its function is as follows. Inhibits the PLA2 activity of crotoxin (CTX) by replacing the acid subunit (CA) in the CTX complex. Displays a pro-inflammatory action through activation of important main signaling pathways for human leukocytes, in vitro. Abolishes both the muscle-paralyzing and muscle-damaging activities of CTX in mice phrenic nerve-diaphragm muscle preparations. The sequence is that of Phospholipase A2 inhibitor CNF from Crotalus durissus terrificus (South American rattlesnake).